Here is a 232-residue protein sequence, read N- to C-terminus: MENLKKALLEQFDLVFSDETLLETAFTHTSYANEHRLLKISHNERLEFLGDAVLQLIISEYLYTKYPKRPEGDLSKLRSMIVREESLAGFARDCQFDQFIKLGRGEEKSGGRNRDTILGDLFEAFLGALLLDKGVEAVKSFLYQVMIPKVEAGDFERVTDYKTKLQELLQINGDVEIAYQVVSETGPAHAKNFEVAVLINGRKSGQGQGRSKKLAEQEAAKNAFEKESSSCF.

Residues 5-134 enclose the RNase III domain; sequence KKALLEQFDL…FLGALLLDKG (130 aa). A Mg(2+)-binding site is contributed by glutamate 47. Aspartate 51 is an active-site residue. Residues aspartate 120 and glutamate 123 each coordinate Mg(2+). Glutamate 123 is a catalytic residue. Positions 160–229 constitute a DRBM domain; sequence DYKTKLQELL…AKNAFEKESS (70 aa). Residues 203–232 are disordered; sequence KSGQGQGRSKKLAEQEAAKNAFEKESSSCF. Basic and acidic residues predominate over residues 213–232; that stretch reads KLAEQEAAKNAFEKESSSCF.

Belongs to the ribonuclease III family. In terms of assembly, homodimer. Requires Mg(2+) as cofactor.

Its subcellular location is the cytoplasm. It carries out the reaction Endonucleolytic cleavage to 5'-phosphomonoester.. Its function is as follows. Digests double-stranded RNA. Involved in the processing of primary rRNA transcript to yield the immediate precursors to the large and small rRNAs (23S and 16S). Processes some mRNAs, and tRNAs when they are encoded in the rRNA operon. Processes pre-crRNA and tracrRNA of type II CRISPR loci if present in the organism. This chain is Ribonuclease 3, found in Streptococcus sanguinis (strain SK36).